The chain runs to 340 residues: Ketol-acid reductoisomerase (NADP(+)) (340 aa).

The KARI N-terminal Rossmann domain maps to 1 to 183; the sequence is MAITVYYDKD…GGGRTGIIET (183 aa). NADP(+)-binding positions include 26–29, Arg-49, Ser-52, Ser-54, and 84–87; these read FGSQ and DEIQ. His-109 is an active-site residue. Residue Gly-135 coordinates NADP(+). The KARI C-terminal knotted domain maps to 184–329; sequence TFKAETETDL…RNLRAMMPWI (146 aa). 4 residues coordinate Mg(2+): Asp-192, Glu-196, Glu-228, and Glu-232. Ser-253 is a binding site for substrate.

It belongs to the ketol-acid reductoisomerase family. It depends on Mg(2+) as a cofactor.

The catalysed reaction is (2R)-2,3-dihydroxy-3-methylbutanoate + NADP(+) = (2S)-2-acetolactate + NADPH + H(+). The enzyme catalyses (2R,3R)-2,3-dihydroxy-3-methylpentanoate + NADP(+) = (S)-2-ethyl-2-hydroxy-3-oxobutanoate + NADPH + H(+). Its pathway is amino-acid biosynthesis; L-isoleucine biosynthesis; L-isoleucine from 2-oxobutanoate: step 2/4. It functions in the pathway amino-acid biosynthesis; L-valine biosynthesis; L-valine from pyruvate: step 2/4. Its function is as follows. Involved in the biosynthesis of branched-chain amino acids (BCAA). Catalyzes an alkyl-migration followed by a ketol-acid reduction of (S)-2-acetolactate (S2AL) to yield (R)-2,3-dihydroxy-isovalerate. In the isomerase reaction, S2AL is rearranged via a Mg-dependent methyl migration to produce 3-hydroxy-3-methyl-2-ketobutyrate (HMKB). In the reductase reaction, this 2-ketoacid undergoes a metal-dependent reduction by NADPH to yield (R)-2,3-dihydroxy-isovalerate. The polypeptide is Ketol-acid reductoisomerase (NADP(+)) (Campylobacter jejuni subsp. jejuni serotype O:23/36 (strain 81-176)).